The chain runs to 118 residues: Large ribosomal subunit protein bL17 (118 aa).

Belongs to the bacterial ribosomal protein bL17 family. In terms of assembly, part of the 50S ribosomal subunit. Contacts protein L32.

This Campylobacter hominis (strain ATCC BAA-381 / DSM 21671 / CCUG 45161 / LMG 19568 / NCTC 13146 / CH001A) protein is Large ribosomal subunit protein bL17.